Consider the following 754-residue polypeptide: Condensin complex subunit 2 (754 aa).

The segment at 104–149 (LAQRKTNGASNGDDSNGGNGEGLGGDSDEANIEIDPLTGMPISNDP) is disordered. Gly residues predominate over residues 118–128 (SNGGNGEGLGG). Ser245 carries the phosphoserine modification. The disordered stretch occupies residues 359–379 (CYPDENHDNTSHDEQDDDNVN). Basic and acidic residues predominate over residues 362-371 (DENHDNTSHD). The residue at position 548 (Ser548) is a Phosphoserine. Residues 665 to 688 (HDSRKNREQSSNDSETHTEDESTK) are disordered.

It belongs to the CND2 (condensin subunit 2) family. As to quaternary structure, component of the condensin complex, which contains the SMC2 and SMC4 heterodimer, and three non SMC subunits that probably regulate the complex: BRN1, YCS4 and YCG1/YCS5.

It is found in the nucleus. The protein resides in the cytoplasm. The protein localises to the chromosome. Functionally, regulatory subunit of the condensin complex, a complex required for conversion of interphase chromatin into mitotic-like condense chromosomes. The condensin complex probably introduces positive supercoils into relaxed DNA in the presence of type I topoisomerases and converts nicked DNA into positive knotted forms in the presence of type II topoisomerases. The condensin complex probably also plays a role during interphase. The protein is Condensin complex subunit 2 (BRN1) of Saccharomyces cerevisiae (strain ATCC 204508 / S288c) (Baker's yeast).